The primary structure comprises 492 residues: MANYFNTLNLRQKLDQLGRCRFMDREEFADEANFLKGKKIVIVGCGAQGLNQGLNMRDSGLDISYALRPEAIAEKRASFQRATENGFKVGTYEELIPTADLVVNLTPDKQHSKVVADVMPLMKKDSAFGYSHGFNIVEVGEEIRKDITVVMVAPKCPGTEVREEYKRGFGVPTLIAVHPENDPKGEGLAIAKAWAAATGGHKAGVLESSFVAEVKSDLMGEQTILCGMLQAGSIVCYDKLVADGKDPAYAGKLIQYGWETITEALKQGGITLMMDRLSNSAKLRAFELAEQIKESLGFLYYKHMDDIISGHFSATMMADWANGDKDLFAWREATGKTAFENAPKYDGKISEQEYFDNGVLMIAMVKAGVELAFDAMVASGIYEESAYYESLHELPLIANTIARKRLYEMNVVISDTAEYGNYLFSNVATPILAKEIIPNLQKGDLGEPTPAVEIDNITLRDVNDAIRNHPVELIGQELRGYMTDMKRIAVAG.

The region spanning 14–208 (LDQLGRCRFM…GGHKAGVLES (195 aa)) is the KARI N-terminal Rossmann domain. NADP(+)-binding positions include 45–48 (CGAQ), R68, R76, S78, and 108–110 (DKQ). Residue H132 is part of the active site. NADP(+) is bound at residue G158. KARI C-terminal knotted domains lie at 209 to 344 (SFVA…NAPK) and 345 to 485 (YDGK…MTDM). The Mg(2+) site is built by D217, E221, E389, and E393. S414 is a substrate binding site.

This sequence belongs to the ketol-acid reductoisomerase family. Mg(2+) serves as cofactor.

It carries out the reaction (2R)-2,3-dihydroxy-3-methylbutanoate + NADP(+) = (2S)-2-acetolactate + NADPH + H(+). The enzyme catalyses (2R,3R)-2,3-dihydroxy-3-methylpentanoate + NADP(+) = (S)-2-ethyl-2-hydroxy-3-oxobutanoate + NADPH + H(+). Its pathway is amino-acid biosynthesis; L-isoleucine biosynthesis; L-isoleucine from 2-oxobutanoate: step 2/4. The protein operates within amino-acid biosynthesis; L-valine biosynthesis; L-valine from pyruvate: step 2/4. Involved in the biosynthesis of branched-chain amino acids (BCAA). Catalyzes an alkyl-migration followed by a ketol-acid reduction of (S)-2-acetolactate (S2AL) to yield (R)-2,3-dihydroxy-isovalerate. In the isomerase reaction, S2AL is rearranged via a Mg-dependent methyl migration to produce 3-hydroxy-3-methyl-2-ketobutyrate (HMKB). In the reductase reaction, this 2-ketoacid undergoes a metal-dependent reduction by NADPH to yield (R)-2,3-dihydroxy-isovalerate. The sequence is that of Ketol-acid reductoisomerase (NADP(+)) from Haemophilus influenzae (strain 86-028NP).